The primary structure comprises 308 residues: 34.2 kDa protein in rubredoxin operon (308 aa).

Cys-136 and Cys-139 form a disulfide bridge. Residue 268-278 (TNIKGVFAAGD) coordinates FAD.

It belongs to the class-II pyridine nucleotide-disulfide oxidoreductase family.

This Clostridium pasteurianum protein is 34.2 kDa protein in rubredoxin operon.